We begin with the raw amino-acid sequence, 230 residues long: RNA chaperone ProQ (230 aa).

The tract at residues Ala-104 to Thr-176 is disordered. Positions Ala-115–Lys-132 are enriched in basic and acidic residues.

The protein belongs to the ProQ family.

The protein localises to the cytoplasm. In terms of biological role, RNA chaperone with significant RNA binding, RNA strand exchange and RNA duplexing activities. May regulate ProP activity through an RNA-based, post-transcriptional mechanism. This is RNA chaperone ProQ from Proteus mirabilis (strain HI4320).